Here is a 491-residue protein sequence, read N- to C-terminus: Cadherin-3 (491 aa).

3 Cadherin domains span residues 1–102, 103–208, and 209–314; these read ENTV…PPVF, VPPS…DHGP, and VPEP…DPWT. The Extracellular segment spans residues 1–316; the sequence is ENTVSHEVQR…VTCRDPWTWG (316 aa). N-linked (GlcNAc...) asparagine glycosylation is present at asparagine 228. A helical membrane pass occupies residues 317–339; sequence FLLPILGAALALLLLLLVLLFLV. The Cytoplasmic segment spans residues 340–491; sequence RKKRKIKEPL…ADMYGGGQDD (152 aa).

Interacts with CDCP1 and CTNNB1.

The protein resides in the cell membrane. In terms of biological role, cadherins are calcium-dependent cell adhesion proteins. They preferentially interact with themselves in a homophilic manner in connecting cells; cadherins may thus contribute to the sorting of heterogeneous cell types. This Bos taurus (Bovine) protein is Cadherin-3 (CDH3).